The primary structure comprises 158 residues: NADH-quinone oxidoreductase subunit B (158 aa).

[4Fe-4S] cluster contacts are provided by Cys37, Cys38, Cys102, and Cys132.

It belongs to the complex I 20 kDa subunit family. In terms of assembly, NDH-1 is composed of 14 different subunits. Subunits NuoB, C, D, E, F, and G constitute the peripheral sector of the complex. [4Fe-4S] cluster is required as a cofactor.

The protein resides in the cell inner membrane. The enzyme catalyses a quinone + NADH + 5 H(+)(in) = a quinol + NAD(+) + 4 H(+)(out). NDH-1 shuttles electrons from NADH, via FMN and iron-sulfur (Fe-S) centers, to quinones in the respiratory chain. Couples the redox reaction to proton translocation (for every two electrons transferred, four hydrogen ions are translocated across the cytoplasmic membrane), and thus conserves the redox energy in a proton gradient. The polypeptide is NADH-quinone oxidoreductase subunit B (Legionella pneumophila (strain Paris)).